The following is a 190-amino-acid chain: Xanthine phosphoribosyltransferase (190 aa).

2 residues coordinate xanthine: leucine 20 and asparagine 27. 128 to 132 (ANGHA) contributes to the 5-phospho-alpha-D-ribose 1-diphosphate binding site. Position 156 (lysine 156) interacts with xanthine.

This sequence belongs to the purine/pyrimidine phosphoribosyltransferase family. Xpt subfamily. In terms of assembly, homodimer.

Its subcellular location is the cytoplasm. It catalyses the reaction XMP + diphosphate = xanthine + 5-phospho-alpha-D-ribose 1-diphosphate. The protein operates within purine metabolism; XMP biosynthesis via salvage pathway; XMP from xanthine: step 1/1. Its function is as follows. Converts the preformed base xanthine, a product of nucleic acid breakdown, to xanthosine 5'-monophosphate (XMP), so it can be reused for RNA or DNA synthesis. The sequence is that of Xanthine phosphoribosyltransferase from Ectopseudomonas mendocina (strain ymp) (Pseudomonas mendocina).